We begin with the raw amino-acid sequence, 314 residues long: Ribosomal protein L11 methyltransferase (314 aa).

4 residues coordinate S-adenosyl-L-methionine: Thr-163, Gly-184, Asp-206, and Asn-248.

This sequence belongs to the methyltransferase superfamily. PrmA family.

It localises to the cytoplasm. It catalyses the reaction L-lysyl-[protein] + 3 S-adenosyl-L-methionine = N(6),N(6),N(6)-trimethyl-L-lysyl-[protein] + 3 S-adenosyl-L-homocysteine + 3 H(+). Methylates ribosomal protein L11. The protein is Ribosomal protein L11 methyltransferase of Lactobacillus acidophilus (strain ATCC 700396 / NCK56 / N2 / NCFM).